We begin with the raw amino-acid sequence, 136 residues long: Holo-[acyl-carrier-protein] synthase (136 aa).

The Mg(2+) site is built by D8 and E57.

Belongs to the P-Pant transferase superfamily. AcpS family. Mg(2+) serves as cofactor.

The protein localises to the cytoplasm. It carries out the reaction apo-[ACP] + CoA = holo-[ACP] + adenosine 3',5'-bisphosphate + H(+). Functionally, transfers the 4'-phosphopantetheine moiety from coenzyme A to a Ser of acyl-carrier-protein. This is Holo-[acyl-carrier-protein] synthase from Methylorubrum extorquens (strain PA1) (Methylobacterium extorquens).